Consider the following 785-residue polypeptide: Probably inactive leucine-rich repeat receptor-like protein kinase At5g58150 (785 aa).

A signal peptide spans 1-21 (MRLSLWGSLLFFSFFVKHLTS). Over 22–436 (LDPNTDAYHL…KVNKKNTGLK (415 aa)) the chain is Extracellular. LRR repeat units follow at residues 64-88 (SENV…TIGK), 89-112 (MSKL…LWSL), 114-136 (LLES…IGNF), 138-160 (SLHT…ISNL), 161-184 (VNLT…LVHC), 186-208 (SLLS…FGSA), 210-232 (PLLK…VLHE), 236-258 (TVDL…HKHN), 259-283 (WSSL…LSSA), 284-306 (HKLG…EIGK), 307-330 (LSAL…EISR), 331-355 (LSHL…SVKN), 357-377 (EVLD…LLEK), and 379-405 (AMMQ…TIQR). Asn119 is a glycosylation site (N-linked (GlcNAc...) asparagine). N-linked (GlcNAc...) asparagine glycosylation is found at Asn162, Asn198, Asn216, and Asn258. 3 N-linked (GlcNAc...) asparagine glycosylation sites follow: Asn314, Asn319, and Asn343. N-linked (GlcNAc...) asparagine glycans are attached at residues Asn385, Asn390, and Asn397. A helical transmembrane segment spans residues 437–457 (IGLGLAISMAFLLIGLLLILV). Residues 458 to 785 (ALRVRRKSRT…GLLKDISPNY (328 aa)) lie on the Cytoplasmic side of the membrane. Phosphothreonine is present on residues Thr510 and Thr518. One can recognise a Protein kinase domain in the interval 521 to 785 (FDRGTMLWEG…GLLKDISPNY (265 aa)). Residues 527-535 (LWEGKSGPT) and Lys549 contribute to the ATP site. A phosphotyrosine mark is found at Tyr594 and Tyr683.

This sequence belongs to the protein kinase superfamily. Ser/Thr protein kinase family.

Its subcellular location is the cell membrane. This chain is Probably inactive leucine-rich repeat receptor-like protein kinase At5g58150, found in Arabidopsis thaliana (Mouse-ear cress).